The sequence spans 603 residues: NADH-ubiquinone oxidoreductase chain 5 (603 aa).

16 consecutive transmembrane segments (helical) span residues 4–24, 38–58, 87–107, 122–142, 144–160, 171–191, 211–233, 241–261, 272–292, 301–320, 325–347, 370–390, 405–422, 457–477, 482–502, and 582–602; these read YATMTTLALTSLIPPILGALI, SIIASTFIISLFPTTMFMCLD, MTFIPVALFVTWSIMEFSLWY, LIFLITMLILVTANNLFQLFI, WEGVGIMSFLLISWWYA, AILYNRIGDIGFVLALAWFLL, TPLLGFLLAAAGKSAQLGLHPWL, TPVSALLHSSTMVVAGIFLLI, LIQTLTLCLGAITTLFAAVCA, IVAFSTSSQLGLMMVTIGIN, AFLHICTHAFFKAMLFMCSGSII, STSLTIGSLALAGMPFLTGFY, NAWALSITLIATSLTSAY, LTIGSLFAGFLITNNILPMST, IPLYLKLTALGVTSLGLLTAL, and GMIKLYFLSFFFPLILTLLLI.

Belongs to the complex I subunit 5 family. As to quaternary structure, core subunit of respiratory chain NADH dehydrogenase (Complex I) which is composed of 45 different subunits.

It localises to the mitochondrion inner membrane. The catalysed reaction is a ubiquinone + NADH + 5 H(+)(in) = a ubiquinol + NAD(+) + 4 H(+)(out). Functionally, core subunit of the mitochondrial membrane respiratory chain NADH dehydrogenase (Complex I) which catalyzes electron transfer from NADH through the respiratory chain, using ubiquinone as an electron acceptor. Essential for the catalytic activity and assembly of complex I. This is NADH-ubiquinone oxidoreductase chain 5 (MT-ND5) from Pan troglodytes (Chimpanzee).